We begin with the raw amino-acid sequence, 527 residues long: Inosine-5'-monophosphate dehydrogenase (527 aa).

2 CBS domains span residues 121-183 (FILD…VTAV) and 184-240 (MSTD…PLAS). Residues 277-279 (DSS) and 327-329 (GMG) contribute to the NAD(+) site. Residues glycine 329 and glycine 331 each contribute to the K(+) site. Residue serine 332 participates in IMP binding. Cysteine 334 serves as a coordination point for K(+). The Thioimidate intermediate role is filled by cysteine 334. IMP is bound by residues 367 to 369 (DGG) and 390 to 391 (GS). The Proton acceptor role is filled by arginine 440. Glutamine 452 serves as a coordination point for IMP. Positions 506–527 (ASAQTEGNVHGLHSHEKKLYSS) are disordered. Positions 511 and 512 each coordinate K(+). Residues 518 to 527 (HSHEKKLYSS) show a composition bias toward basic and acidic residues.

Belongs to the IMPDH/GMPR family. Homotetramer. Requires K(+) as cofactor.

Its subcellular location is the cytoplasm. It catalyses the reaction IMP + NAD(+) + H2O = XMP + NADH + H(+). Its pathway is purine metabolism; XMP biosynthesis via de novo pathway; XMP from IMP: step 1/1. Its activity is regulated as follows. Mycophenolic acid (MPA) is a non-competitive inhibitor that prevents formation of the closed enzyme conformation by binding to the same site as the amobile flap. In contrast, mizoribine monophosphate (MZP) is a competitive inhibitor that induces the closed conformation. MPA is a potent inhibitor of mammalian IMPDHs but a poor inhibitor of the bacterial enzymes. MZP is a more potent inhibitor of bacterial IMPDH. Its function is as follows. Catalyzes the conversion of inosine 5'-phosphate (IMP) to xanthosine 5'-phosphate (XMP), the first committed and rate-limiting step in the de novo synthesis of guanine nucleotides, and therefore plays an important role in the regulation of cell growth. Part of the gene cluster that mediates the biosynthesis of mycophenolic acid (MPA), the first isolated antibiotic natural product in the world. Does not play a role in the biosynthesis of MPA, but is involved in self resistance to MPA, since MPA acts as an inhibitor of IMP dehydrogenases. This chain is Inosine-5'-monophosphate dehydrogenase, found in Penicillium brevicompactum.